A 156-amino-acid chain; its full sequence is Small ribosomal subunit protein uS7 (156 aa).

It belongs to the universal ribosomal protein uS7 family. As to quaternary structure, part of the 30S ribosomal subunit. Contacts proteins S9 and S11.

In terms of biological role, one of the primary rRNA binding proteins, it binds directly to 16S rRNA where it nucleates assembly of the head domain of the 30S subunit. Is located at the subunit interface close to the decoding center, probably blocks exit of the E-site tRNA. This is Small ribosomal subunit protein uS7 from Gloeothece citriformis (strain PCC 7424) (Cyanothece sp. (strain PCC 7424)).